The chain runs to 462 residues: Argininosuccinate lyase (462 aa).

Belongs to the lyase 1 family. Argininosuccinate lyase subfamily.

It localises to the cytoplasm. It catalyses the reaction 2-(N(omega)-L-arginino)succinate = fumarate + L-arginine. The protein operates within amino-acid biosynthesis; L-arginine biosynthesis; L-arginine from L-ornithine and carbamoyl phosphate: step 3/3. This is Argininosuccinate lyase from Hydrogenovibrio crunogenus (strain DSM 25203 / XCL-2) (Thiomicrospira crunogena).